The following is a 617-amino-acid chain: Mitochondrial Rho GTPase 2 (617 aa).

Topologically, residues methionine 1–serine 590 are cytoplasmic. One can recognise a Miro 1 domain in the interval lysine 2–histidine 168. GTP contacts are provided by glycine 16, lysine 17, threonine 18, and serine 19. Threonine 18 is a Mg(2+) binding site. A Mg(2+)-binding site is contributed by aspartate 57. 6 residues coordinate GTP: serine 59, asparagine 118, lysine 119, aspartate 121, alanine 149, and lysine 150. 2 EF-hand domains span residues glutamine 184–asparagine 219 and leucine 304–methionine 339. 8 residues coordinate Ca(2+): aspartate 197, aspartate 199, aspartate 201, glutamate 208, aspartate 317, aspartate 319, aspartate 321, and glutamate 328. The region spanning arginine 416 to tyrosine 578 is the Miro 2 domain. GTP-binding residues include glycine 428, glycine 430, lysine 431, and threonine 432. Mg(2+) is bound by residues threonine 432 and glutamate 474. GTP-binding residues include lysine 528 and aspartate 530. The chain crosses the membrane as a helical; Anchor for type IV membrane protein span at residues phenylalanine 591–phenylalanine 613. Over serine 614 to lysine 617 the chain is Mitochondrial intermembrane.

This sequence belongs to the mitochondrial Rho GTPase family. As to quaternary structure, homodimer.

The protein localises to the mitochondrion outer membrane. It carries out the reaction GTP + H2O = GDP + phosphate + H(+). The enzyme catalyses ATP + H2O = ADP + phosphate + H(+). It catalyses the reaction UTP + H2O = UDP + phosphate + H(+). In terms of biological role, atypical mitochondrial nucleoside-triphosphatase (NTPase) involved in mitochondrial trafficking. Probably involved in control of anterograde transport of mitochondria and their subcellular distribution. Can hydrolyze GTP, ATP and UTP. This Danio rerio (Zebrafish) protein is Mitochondrial Rho GTPase 2 (rhot2).